Here is a 503-residue protein sequence, read N- to C-terminus: MEFSVKSGSPEKQRSACIVVGVFEPRRLSPIAEQLDKISDGYISALLRRGELEGKPGQTLLLHHVPNVLSERILLIGCGKERELDERQYKQVIQKTINTLNDTGSMEAVCFLTELHVKGRNNYWKVRQAVETAKETLYSFDQLKTNKSEPRRPLRKMVFNVPTRRELTSGERAIQHGQAIAAGIKAAKDLGNMPPNICNAAYLASQARQLADSYSKNVITRVIGEQQMKELGMHSYLAVGQGSQNESLMSVIEYKGNASEDARPIVLVGKGLTFDSGGISIKPSEGMDEMKYDMCGAAAVYGVMRMVAELQLPINVIGVLAGCENMPGGRAYRPGDVLTTMSGQTVEVLNTDAEGRLVLCDVLTYVERFEPEAVIDVATLTGACVIALGHHITGLMTNHNPLAHELIAASEQSGDRAWRLPLGDEYQEQLESNFADMANIGGRPGGAITAGCFLSRFTRKYNWAHLDIAGTAWRSGKAKGATGRPVALLAQFLLNRAGFNGEE.

The Mn(2+) site is built by lysine 270 and aspartate 275. Lysine 282 is a catalytic residue. Residues aspartate 293, aspartate 352, and glutamate 354 each coordinate Mn(2+). Arginine 356 is an active-site residue.

The protein belongs to the peptidase M17 family. Mn(2+) is required as a cofactor.

The protein localises to the cytoplasm. It carries out the reaction Release of an N-terminal amino acid, Xaa-|-Yaa-, in which Xaa is preferably Leu, but may be other amino acids including Pro although not Arg or Lys, and Yaa may be Pro. Amino acid amides and methyl esters are also readily hydrolyzed, but rates on arylamides are exceedingly low.. It catalyses the reaction Release of an N-terminal amino acid, preferentially leucine, but not glutamic or aspartic acids.. Its function is as follows. Presumably involved in the processing and regular turnover of intracellular proteins. Catalyzes the removal of unsubstituted N-terminal amino acids from various peptides. This chain is Probable cytosol aminopeptidase, found in Shigella flexneri.